A 311-amino-acid chain; its full sequence is HPr kinase/phosphorylase (311 aa).

Catalysis depends on residues His-139 and Lys-160. Position 154–161 (154–161 (GDSGVGKS)) interacts with ATP. Residue Ser-161 participates in Mg(2+) binding. Asp-178 serves as the catalytic Proton acceptor; for phosphorylation activity. Proton donor; for dephosphorylation activity. The tract at residues 202–211 (LEIRGIGIID) is important for the catalytic mechanism of both phosphorylation and dephosphorylation. Residue Glu-203 participates in Mg(2+) binding. The active site involves Arg-244. The interval 265–270 (PVKTGR) is important for the catalytic mechanism of dephosphorylation.

This sequence belongs to the HPrK/P family. In terms of assembly, homohexamer. Requires Mg(2+) as cofactor.

It catalyses the reaction [HPr protein]-L-serine + ATP = [HPr protein]-O-phospho-L-serine + ADP + H(+). The enzyme catalyses [HPr protein]-O-phospho-L-serine + phosphate + H(+) = [HPr protein]-L-serine + diphosphate. Its function is as follows. Catalyzes the ATP- as well as the pyrophosphate-dependent phosphorylation of a specific serine residue in HPr, a phosphocarrier protein of the phosphoenolpyruvate-dependent sugar phosphotransferase system (PTS). HprK/P also catalyzes the pyrophosphate-producing, inorganic phosphate-dependent dephosphorylation (phosphorolysis) of seryl-phosphorylated HPr (P-Ser-HPr). The two antagonistic activities of HprK/P are regulated by several intracellular metabolites, which change their concentration in response to the absence or presence of rapidly metabolisable carbon sources (glucose, fructose, etc.) in the growth medium. Therefore, by controlling the phosphorylation state of HPr, HPrK/P is a sensor enzyme that plays a major role in the regulation of carbon metabolism and sugar transport: it mediates carbon catabolite repression (CCR), and regulates PTS-catalyzed carbohydrate uptake and inducer exclusion. The sequence is that of HPr kinase/phosphorylase from Levilactobacillus brevis (strain ATCC 367 / BCRC 12310 / CIP 105137 / JCM 1170 / LMG 11437 / NCIMB 947 / NCTC 947) (Lactobacillus brevis).